A 175-amino-acid chain; its full sequence is Calcineurin subunit B (175 aa).

4 consecutive EF-hand domains span residues 21-56, 60-88, 90-125, and 131-166; these read DEIE…SANP, RIME…FSGR, SKDE…MVGS, and QLQQ…TEVA. Asp-34, Asp-36, Ser-38, Ser-40, Glu-45, Asp-66, Asp-68, Ser-70, Asp-72, Glu-77, Asp-103, Asp-105, Asp-107, Glu-114, Asp-144, Asp-146, Asp-148, Gln-150, and Glu-155 together coordinate Ca(2+).

The protein belongs to the calcineurin regulatory subunit family. In terms of assembly, composed of a catalytic subunit (A) and a regulatory subunit (B).

In terms of biological role, regulatory subunit of calcineurin, a calcium-dependent, calmodulin stimulated protein phosphatase. Confers calcium sensitivity. The chain is Calcineurin subunit B (CNB1) from Candida glabrata (strain ATCC 2001 / BCRC 20586 / JCM 3761 / NBRC 0622 / NRRL Y-65 / CBS 138) (Yeast).